A 122-amino-acid chain; its full sequence is Large ribosomal subunit protein uL14 (122 aa).

It belongs to the universal ribosomal protein uL14 family. As to quaternary structure, part of the 50S ribosomal subunit. Forms a cluster with proteins L3 and L19. In the 70S ribosome, L14 and L19 interact and together make contacts with the 16S rRNA in bridges B5 and B8.

In terms of biological role, binds to 23S rRNA. Forms part of two intersubunit bridges in the 70S ribosome. This is Large ribosomal subunit protein uL14 from Spiroplasma citri.